Consider the following 100-residue polypeptide: MAKKSIIHRDKKRENLVKKYQEIRNSIKENIKQAKSLNEKWELQKQLQALPRNSSPTRIHRRCFVTGRPRAVYRDFGLSRHVIREMAHSCLLPGVTKSSW.

This sequence belongs to the universal ribosomal protein uS14 family. In terms of assembly, part of the 30S ribosomal subunit.

It localises to the plastid. The protein resides in the chloroplast. Functionally, binds 16S rRNA, required for the assembly of 30S particles. This Chaetosphaeridium globosum (Charophycean green alga) protein is Small ribosomal subunit protein uS14c.